Reading from the N-terminus, the 231-residue chain is Peroxisomal membrane protein 11E (231 aa).

Topologically, residues 1 to 91 (MTTLDLTRAE…LPLVLLGKSK (91 aa)) are cytoplasmic. The helical transmembrane segment at 92 to 108 (NALLSTFLFLDQIVWLG) threads the bilayer. Residues 109 to 202 (RSGIYKNKER…LLQLAPKTIS (94 aa)) lie on the Lumenal side of the membrane. The chain crosses the membrane as a helical span at residues 203 to 222 (PRVTGAFGFTTSLISCYQLL). The Cytoplasmic portion of the chain corresponds to 223–231 (PSRPKLKTP).

This sequence belongs to the peroxin-11 family. As to quaternary structure, homooligomer. Interacts with ARC5 and FIS1B on peroxisomes. Expressed in leaves and developing siliques.

It localises to the peroxisome membrane. In terms of biological role, involved in peroxisomal proliferation. Promotes peroxisomal duplication, aggregation or elongation without fission. The polypeptide is Peroxisomal membrane protein 11E (PEX11E) (Arabidopsis thaliana (Mouse-ear cress)).